Consider the following 268-residue polypeptide: Centromere protein Q (268 aa).

Residues Met-1–Thr-80 are disordered. A phosphoserine mark is found at Ser-31 and Ser-50. The segment covering Thr-58–Thr-72 has biased composition (basic residues). Residues Glu-170–Ser-206 adopt a coiled-coil conformation. The residue at position 249 (Ser-249) is a Phosphoserine.

The protein belongs to the CENP-Q/OKP1 family. As to quaternary structure, component of the CENPA-CAD complex, composed of CENPI, CENPK, CENPL, CENPO, CENPP, CENPQ, CENPR and CENPS. The CENPA-CAD complex interacts with the CENPA-NAC complex, at least composed of CENPA, CENPC, CENPH, CENPM, CENPN, CENPT and CENPU. Post-translationally, phosphorylation at Ser-50 is essential for CENPE recruitment to kinetochores and orderly chromosome congression.

The protein resides in the nucleus. The protein localises to the chromosome. It localises to the centromere. Component of the CENPA-CAD (nucleosome distal) complex, a complex recruited to centromeres which is involved in assembly of kinetochore proteins, mitotic progression and chromosome segregation. May be involved in incorporation of newly synthesized CENPA into centromeres via its interaction with the CENPA-NAC complex. Plays an important role in chromosome congression and in the recruitment of CENP-O complex (which comprises CENPO, CENPP, CENPQ and CENPU), CENPE and PLK1 to the kinetochores. The polypeptide is Centromere protein Q (CENPQ) (Homo sapiens (Human)).